We begin with the raw amino-acid sequence, 687 residues long: Adhesion G-protein coupled receptor G1 (687 aa).

The first 25 residues, methionine 1–glycine 25, serve as a signal peptide directing secretion. Arginine 26 to arginine 33 contacts heparin. Residues arginine 26–tyrosine 402 are Extracellular-facing. Intrachain disulfides connect cysteine 35-cysteine 91 and cysteine 121-cysteine 177. N-linked (GlcNAc...) asparagine glycans are attached at residues asparagine 39, asparagine 148, and asparagine 171. Heparin is bound at residue leucine 190–proline 200. The 172-residue stretch at aspartate 224 to valine 395 folds into the GAIN-B domain. N-linked (GlcNAc...) asparagine glycans are attached at residues asparagine 234, asparagine 303, asparagine 324, and asparagine 341. Cystine bridges form between cysteine 346–cysteine 377 and cysteine 366–cysteine 379. The tract at residues cysteine 346–valine 395 is GPS. The stachel stretch occupies residues tyrosine 384–alanine 397. The helical transmembrane segment at leucine 403–alanine 423 threads the bilayer. Residues alanine 424 to asparagine 442 lie on the Cytoplasmic side of the membrane. A helical membrane pass occupies residues leucine 443–threonine 463. Residues glycine 464–arginine 470 are Extracellular-facing. A helical transmembrane segment spans residues alanine 471 to glycine 491. Over tyrosine 492–lysine 512 the chain is Cytoplasmic. The chain crosses the membrane as a helical span at residues leucine 513–valine 533. Topologically, residues aspartate 534–glycine 570 are extracellular. Residues leucine 571–leucine 591 form a helical membrane-spanning segment. The Cytoplasmic portion of the chain corresponds to arginine 592–valine 603. A helical transmembrane segment spans residues leucine 604–phenylalanine 624. The Extracellular segment spans residues alanine 625–glutamine 630. The chain crosses the membrane as a helical span at residues leucine 631 to tryptophan 651. Residues tyrosine 652–isoleucine 687 lie on the Cytoplasmic side of the membrane. The tract at residues serine 664 to isoleucine 687 is disordered. Low complexity predominate over residues serine 678–isoleucine 687.

The protein belongs to the G-protein coupled receptor 2 family. LN-TM7 subfamily. In terms of assembly, heterodimer of 2 chains generated by proteolytic processing; the large extracellular N-terminal fragment (ADGRG1 NT) and the membrane-bound C-terminal fragment (ADGRG1-CT) predominantly remain associated and non-covalently linked. ADGRG1 NT self-associates in a trans-trans manner; the homophilic interaction enhances receptor signaling. Interacts with TGM2. Interacts with heparin; leading to the reduction of ADGRG1 shedding. Interacts with COL3A1. Part of a GPCR-tetraspanin complex at least consisting of ADGRG1, CD81, eventually CD9, and GNA11 in which CD81 is enhancing the association of ADGRG1 with GNA11. Post-translationally, autoproteolytically cleaved into 2 fragments; the large extracellular N-terminal fragment (ADGRG1 NT) and the membrane-bound C-terminal fragment (ADGRG1 CT) predominantly remain associated and non-covalently linked. Shedding to yield the secreted ADGRG1 N-terminal fragment seems to involve metalloprotease(s). In terms of processing, ubiquitinated. Undergoes polyubiquitination upon activation.

It is found in the cell membrane. The protein localises to the secreted. Its subcellular location is the membrane raft. Forms a heterodimer of 2 chains generated by proteolytic processing that remain associated through non-covalent interactions mediated by the GAIN-B domain. In the inactivated receptor, the Stachel sequence (also named stalk) is embedded in the GAIN-B domain, where it adopts a beta-strand conformation. On activation, the Stachel moves into the 7 transmembrane region and adopts a twisted hook-shaped configuration that forms contacts within the receptor, leading to coupling of a G-alpha protein, which activates signaling. The cleaved GAIN-B and N-terminal domains can then dissociate from the rest of the receptor. In terms of biological role, adhesion G-protein coupled receptor (aGPCR) for steroid hormone 17alpha-hydroxypregnenolone (17-OH), which is involved in cell adhesion and cell-cell interactions. Ligand binding causes a conformation change that triggers signaling via guanine nucleotide-binding proteins (G proteins) and modulates the activity of downstream effectors, such as RhoA pathway. ADGRG1 is coupled to G(12) and/or G(13) G proteins (GNA12 and GNA13, respectively) and mediates the activation Rho small GTPases. Acts as a potent suppressor of ferroptosis: binding to 17-OH-binding initiates signaling that down-regulates CD36 and alleviates ferroptosis-induced liver injury. Ligand-binding also induces cell adhesion activity via association with proteins such as collagen III/COL3A1 and TGM2. Mediates cell matrix adhesion in developing neurons and hematopoietic stem cells. Involved in cortical development, specifically in maintenance of the pial basement membrane integrity and in cortical lamination: association with COL3A1 in the developing brain inhibits neuronal migration via activation of the RhoA pathway. Together with TGM2, acts as a regulator of myelination and myelin repair in oligodendrocyte precursor cells. Acts as a hemostatic sensor of shear force: G protein-coupled receptor signaling is activated in response to shear force in platelets, promoting G(13) G protein signaling, and platelet shape change and aggregation in a COL3A1-dependent manner. Acts as an inhibitor of VEGFA production thereby inhibiting angiogenesis through a signaling pathway mediated by PRKCA. Plays a role in the maintenance of hematopoietic stem cells in bone marrow niche. Plays an essential role in testis development. This Gorilla gorilla gorilla (Western lowland gorilla) protein is Adhesion G-protein coupled receptor G1 (ADGRG1).